A 379-amino-acid polypeptide reads, in one-letter code: MPLFQKEIALKLDIPENIENIKPYPPGKPLDELEREYGITDSIKLASNENPWGASPKAIKAIGESLGDMQRYPDGSAYYLTEAIAKYAGVGMSEIILGNGSNEVIEFLVKAFVQDDSEVITSHPSFLMYQKFVQVRGGVNRVIPLKDMHHDLQTILDTVNEKTRLIFIDNPNNPTGTYLEPELLIDFINSLPEHVILVLDEAYVDFMDLDKWLDVPSLIKNQAGRCGIVSLRTFSKAYGLSGLRVGFGLMAEEIVTCLHKVRQPFNVNSLAQVGALAALGDVDFYEQTLLKNRQGMKWLMKEIKGLGCEPFASQTNFFLIDVQGNADKLYTEMLYKGVIIRSMSAYGYPHYIRVTVGTTVENKRFLKALSDCLKELNYV.

N6-(pyridoxal phosphate)lysine is present on Lys-236.

It belongs to the class-II pyridoxal-phosphate-dependent aminotransferase family. Histidinol-phosphate aminotransferase subfamily. Homodimer. It depends on pyridoxal 5'-phosphate as a cofactor.

It catalyses the reaction L-histidinol phosphate + 2-oxoglutarate = 3-(imidazol-4-yl)-2-oxopropyl phosphate + L-glutamate. It participates in amino-acid biosynthesis; L-histidine biosynthesis; L-histidine from 5-phospho-alpha-D-ribose 1-diphosphate: step 7/9. This chain is Histidinol-phosphate aminotransferase, found in Desulfotalea psychrophila (strain LSv54 / DSM 12343).